Consider the following 172-residue polypeptide: uncharacterized protein (172 aa).

One can recognise an HTH cro/C1-type domain in the interval 21–75; the sequence is FKRILLELGLTLKEFSEISGIPYSTLYKVIQGKDFRVSTLIKILKTIRSFEKDEN. The segment at residues 32-51 is a DNA-binding region (H-T-H motif); the sequence is LKEFSEISGIPYSTLYKVIQ.

This is an uncharacterized protein from Methanocaldococcus jannaschii (strain ATCC 43067 / DSM 2661 / JAL-1 / JCM 10045 / NBRC 100440) (Methanococcus jannaschii).